A 347-amino-acid chain; its full sequence is NADH-ubiquinone oxidoreductase chain 2 (347 aa).

Helical transmembrane passes span 26-46, 60-80, 96-116, 123-143, 151-171, 178-198, 200-220, 240-260, 274-294, and 325-345; these read WLLA…ILTM, FLTQ…NFML, SMAL…FWVP, SLTS…SILY, ITIL…GGLN, ILAY…PYNP, LTIL…MIMM, MMIL…LSGF, DSII…YFYM, and LLPP…FLSI.

The protein belongs to the complex I subunit 2 family. As to quaternary structure, core subunit of respiratory chain NADH dehydrogenase (Complex I) which is composed of 45 different subunits. Interacts with TMEM242.

The protein localises to the mitochondrion inner membrane. It carries out the reaction a ubiquinone + NADH + 5 H(+)(in) = a ubiquinol + NAD(+) + 4 H(+)(out). Functionally, core subunit of the mitochondrial membrane respiratory chain NADH dehydrogenase (Complex I) which catalyzes electron transfer from NADH through the respiratory chain, using ubiquinone as an electron acceptor. Essential for the catalytic activity and assembly of complex I. This chain is NADH-ubiquinone oxidoreductase chain 2, found in Dugong dugon (Dugong).